A 124-amino-acid chain; its full sequence is Large ribosomal subunit protein uL18 (124 aa).

The protein belongs to the universal ribosomal protein uL18 family. Part of the 50S ribosomal subunit; part of the 5S rRNA/L5/L18/L25 subcomplex. Contacts the 5S and 23S rRNAs.

Its function is as follows. This is one of the proteins that bind and probably mediate the attachment of the 5S RNA into the large ribosomal subunit, where it forms part of the central protuberance. The chain is Large ribosomal subunit protein uL18 from Aquifex pyrophilus.